The chain runs to 921 residues: MVIGLLKTLVGSRNDRLLKQYRKVIAKVSAFEPSLQSLDDVALATKTAEFKLRLAAGESLDDIAAEAFAVVREASVRVMKMRHFDAQIMGGLALHQGKIAEMGTGEGKTLTATLPVYLNALTGKGVHVVTVNDYLAQRDAEWMSKLYNFLGMKVGVNLSQMDHTTKQAAYAADITYGTNNEFGFDYLRDNMVQDLDQRVQRGLAYAIVDEVDSILIDEARTPLIISGQAEDHTDLYIKINALPSHLERQIGEEKADGTGVEKPGDYWVDEKSQQVYLTERGHDKAEAVLVQLGALNDGDSLYAPQNITLMHHVFAALRAHTLYLRDQHYVVQNGEVIIVDEFTGRLMQGRRWSDGLHQAVEAKEGVQIQNENQTLATITFQNYFRMYGKLAGMTGTADTEAYEFKEIYNLETVVIPPNRISQRKDKQDQIFKSSRERYDAVIKDIEDCYERGQPVLVGTTSIENSELIAQLLDKRKLPHQVLNAKQHAREAEIIAQAGRPKMITIATNMAGRGTDIVLGGNVGKQSSLIDADSSLSDAEKASKIMQLQDEWQSIHDQVLASGGLHIIGTERHESRRIDNQLRGRSGRQGDPGSSRFYLSLDDPLLRIFAGDRLRAVMERLKMPDGEPIEAGIVTRSIESAQRKVEGRNFDIRKQLLEYDDVANDQRKETYRLRNEVLESSDIGDLIANLREDVLRAVCSVYVPLESMEEQWDLAGLENVLASEWGLTIVLKNWVEGADSVDDSEIVDRVLQLAKESYDAKVDLSGRESFASFERSVLLYSLDSHWREHLAALDYLRQGIHLRGYAQKDPKQEYRREAFELYGELLNVIKNDVVKSIMTVQIRSASELDQASESMNDDLAKLADVQYQHADPDMEVAGSTGDRGAAIDIQPAPLCAGPKVGRNDPCPCGSGKKYKNCCGALT.

ATP-binding positions include Gln-87, Gly-105–Thr-109, and Asp-515. Residues Arg-575–Ser-594 form a disordered region. Residues Cys-905, Cys-907, Cys-916, and Cys-917 each contribute to the Zn(2+) site.

This sequence belongs to the SecA family. Monomer and homodimer. Part of the essential Sec protein translocation apparatus which comprises SecA, SecYEG and auxiliary proteins SecDF-YajC and YidC. Zn(2+) is required as a cofactor.

It is found in the cell inner membrane. It localises to the cytoplasm. The enzyme catalyses ATP + H2O + cellular proteinSide 1 = ADP + phosphate + cellular proteinSide 2.. Part of the Sec protein translocase complex. Interacts with the SecYEG preprotein conducting channel. Has a central role in coupling the hydrolysis of ATP to the transfer of proteins into and across the cell membrane, serving both as a receptor for the preprotein-SecB complex and as an ATP-driven molecular motor driving the stepwise translocation of polypeptide chains across the membrane. This chain is Protein translocase subunit SecA, found in Polynucleobacter necessarius subsp. necessarius (strain STIR1).